Consider the following 154-residue polypeptide: MSMIRRSNVFDPFSLDLWDPFDGFPFGSGSGSLFPRANSDAAAFAGARIDWKETPEAHVFKADVPGLKKEEVKVEVEDGNVLQISGERIKEQEEKTDKWHRVERSSGKFLRRFRLPENTKPEQIKASMENGVLTVTVPKEEPKKPDVKSIQITG.

The sHSP domain maps to Asp-40–Gly-154.

The protein belongs to the small heat shock protein (HSP20) family. In terms of assembly, may form oligomeric structures.

The protein resides in the cytoplasm. This chain is 17.4 kDa class I heat shock protein (HSP17.4), found in Oryza sativa subsp. japonica (Rice).